The primary structure comprises 619 residues: MYGFVNHALELLVIRNYGPEVWEDIKKEAQLDEEGQFLVRIIYDDSKTYDLVAAASKVLNLNAGEILQMFGKMFFVFCQESGYDTILRVLGSNVREFLQNLDALHDHLATIYPGMRAPSFRCTDADKGKGLILHYYSEREGLQDIVIGIIKTVAQQIHGTEIDMKVIQQRNEECDHTQFLIEEKESKEEDFYEDLDRFEENGTQESRISPYTFCKAFPFHIIFDRDLVVTQCGNAIYRVLPQLQPGNCSLLSVFSLVRPHIDISFHGILSHINTVFVLRSKEGLLDVEKSECEDELTGTEISCLRLKGQMIYLPEADSILFLCSPSVMNLDDLTRRGLYLSDIPLHDATRDLVLLGEQFREEYKLTQELEILTDRLQLTLRALEDEKKKTDTLLYSVLPPSVANELRHKRPVPAKRYDNVTILFSGIVGFNAFCSKHASGEGAMKIVNLLNDLYTRFDTLTDSRKNPFVYKVETVGDKYMTVSGLPEPCIHHARSICHLALDMMEIAGQVQVDGESVQITIGIHTGEVVTGVIGQRMPRYCLFGNTVNLTSRTETTGEKGKINVSEYTYRCLMTPENSDPQFHLEHRGPVSMKGKKEPMQVWFLSRKNTGTEETEQDEN.

Position 105 (His-105) interacts with heme. A Guanylate cyclase domain is found at 421-554; the sequence is TILFSGIVGF…NTVNLTSRTE (134 aa).

It belongs to the adenylyl cyclase class-4/guanylyl cyclase family. In terms of assembly, the active enzyme is formed by a heterodimer of an alpha and a beta subunit. Heterodimer with GUCY1A1. Can also form inactive homodimers in vitro. Requires heme as cofactor. Lung and brain.

Its subcellular location is the cytoplasm. It carries out the reaction GTP = 3',5'-cyclic GMP + diphosphate. Activated by nitric oxide in the presence of magnesium or manganese ions, binding of NO to the heme iron increases catalytic activity up to 400 folds. Functionally, mediates responses to nitric oxide (NO) by catalyzing the biosynthesis of the signaling molecule cGMP. This chain is Guanylate cyclase soluble subunit beta-1 (GUCY1B1), found in Bos taurus (Bovine).